A 168-amino-acid chain; its full sequence is MIMIKIGQGIDVHAFHNNGQQQQYVVLAGVPIEHTHSLLAHSDGDVVLHALADALLGALALGDIGQHFPDTDAANAGLDSRVLLRYVYGKVLAAGYMLGNADITVMCERPKLAVHNLAMRANIASDLQTDVSNISVKATTTEKLGFTGRQEGIMANAVVLLVPNTSGV.

The a divalent metal cation site is built by Asp11 and His13. 4-CDP-2-C-methyl-D-erythritol 2-phosphate-binding positions include 11-13 and 41-42; these read DVH and HS. Residue His49 coordinates a divalent metal cation. Residues 63–65, 68–72, 139–142, Phe146, and Arg149 contribute to the 4-CDP-2-C-methyl-D-erythritol 2-phosphate site; these read DIG, FPDTD, and TTTE.

It belongs to the IspF family. As to quaternary structure, homotrimer. A divalent metal cation serves as cofactor.

It catalyses the reaction 4-CDP-2-C-methyl-D-erythritol 2-phosphate = 2-C-methyl-D-erythritol 2,4-cyclic diphosphate + CMP. It participates in isoprenoid biosynthesis; isopentenyl diphosphate biosynthesis via DXP pathway; isopentenyl diphosphate from 1-deoxy-D-xylulose 5-phosphate: step 4/6. Involved in the biosynthesis of isopentenyl diphosphate (IPP) and dimethylallyl diphosphate (DMAPP), two major building blocks of isoprenoid compounds. Catalyzes the conversion of 4-diphosphocytidyl-2-C-methyl-D-erythritol 2-phosphate (CDP-ME2P) to 2-C-methyl-D-erythritol 2,4-cyclodiphosphate (ME-CPP) with a corresponding release of cytidine 5-monophosphate (CMP). In Psychrobacter arcticus (strain DSM 17307 / VKM B-2377 / 273-4), this protein is 2-C-methyl-D-erythritol 2,4-cyclodiphosphate synthase.